Consider the following 326-residue polypeptide: HTH-type transcriptional regulator SyrM (326 aa).

The HTH lysR-type domain occupies 32–89 (IDLNLLVDLEALLQYRHITQAAQHVGRSQPAMSRALSRLRGMLKDDLLVAGSRGLVLT). Positions 49-68 (ITQAAQHVGRSQPAMSRALS) form a DNA-binding region, H-T-H motif.

Belongs to the LysR transcriptional regulatory family.

Acts in trans to stimulate nod gene expression via nodD3 and exo gene expression via SyrA. The protein is HTH-type transcriptional regulator SyrM (syrM) of Rhizobium meliloti (strain 1021) (Ensifer meliloti).